We begin with the raw amino-acid sequence, 250 residues long: Ribosomal RNA small subunit methyltransferase J (250 aa).

S-adenosyl-L-methionine is bound by residues 96-97 and Asp168; that span reads RD.

The protein belongs to the methyltransferase superfamily. RsmJ family.

The protein localises to the cytoplasm. The catalysed reaction is guanosine(1516) in 16S rRNA + S-adenosyl-L-methionine = N(2)-methylguanosine(1516) in 16S rRNA + S-adenosyl-L-homocysteine + H(+). Its function is as follows. Specifically methylates the guanosine in position 1516 of 16S rRNA. The polypeptide is Ribosomal RNA small subunit methyltransferase J (Neisseria meningitidis serogroup B (strain ATCC BAA-335 / MC58)).